Consider the following 224-residue polypeptide: Inhibitor of apoptosis protein (224 aa).

The BIR repeat unit spans residues 29–92; it reads VDARNKSFAI…GFWSRNCGFM (64 aa). Residues cysteine 62, cysteine 65, histidine 82, and cysteine 89 each contribute to the Zn(2+) site. The C4-type zinc-finger motif lies at 189–207; it reads CMTCGIEQINKDENFCSAC.

This sequence belongs to the asfivirus IAP family. Interacts with subunit p17 of host CASP3.

The protein localises to the host cytoplasm. It is found in the virion. Functionally, prevents apoptosis of host cell by inhibiting caspase-3/CASP3 activation to promote the viral replication. Also induces the activation of host NF-kappaB. This chain is Inhibitor of apoptosis protein, found in Ornithodoros (relapsing fever ticks).